The sequence spans 291 residues: 2-C-methyl-D-erythritol 4-phosphate cytidylyltransferase (291 aa).

Positions 1–23 (MTERDFDTPVETPTVQPAPAQGA) are disordered.

Belongs to the IspD/TarI cytidylyltransferase family. IspD subfamily.

The catalysed reaction is 2-C-methyl-D-erythritol 4-phosphate + CTP + H(+) = 4-CDP-2-C-methyl-D-erythritol + diphosphate. It functions in the pathway isoprenoid biosynthesis; isopentenyl diphosphate biosynthesis via DXP pathway; isopentenyl diphosphate from 1-deoxy-D-xylulose 5-phosphate: step 2/6. Catalyzes the formation of 4-diphosphocytidyl-2-C-methyl-D-erythritol from CTP and 2-C-methyl-D-erythritol 4-phosphate (MEP). The chain is 2-C-methyl-D-erythritol 4-phosphate cytidylyltransferase from Bifidobacterium longum (strain NCC 2705).